A 161-amino-acid chain; its full sequence is UPF0506 protein SJCHGC02965 (161 aa).

An N-terminal signal peptide occupies residues 1–13 (QLLILCLVTVINS). Asn15, Asn19, Asn31, Asn43, Asn47, Asn59, Asn63, Asn75, and Asn121 each carry an N-linked (GlcNAc...) asparagine glycan. Intrachain disulfides connect Cys127–Cys141, Cys134–Cys145, and Cys140–Cys150.

This sequence belongs to the UPF0506 family.

The protein localises to the secreted. The protein is UPF0506 protein SJCHGC02965 of Schistosoma japonicum (Blood fluke).